The sequence spans 171 residues: Adenine phosphoribosyltransferase (171 aa).

The protein belongs to the purine/pyrimidine phosphoribosyltransferase family. Homodimer.

The protein localises to the cytoplasm. The enzyme catalyses AMP + diphosphate = 5-phospho-alpha-D-ribose 1-diphosphate + adenine. Its pathway is purine metabolism; AMP biosynthesis via salvage pathway; AMP from adenine: step 1/1. Catalyzes a salvage reaction resulting in the formation of AMP, that is energically less costly than de novo synthesis. This chain is Adenine phosphoribosyltransferase, found in Trichlorobacter lovleyi (strain ATCC BAA-1151 / DSM 17278 / SZ) (Geobacter lovleyi).